The chain runs to 223 residues: Sigma non-opioid intracellular receptor 1 (223 aa).

Residues 1-7 (MAVLSSR) lie on the Lumenal side of the membrane. The chain crosses the membrane as a helical span at residues 8–29 (AMRAALGLAVLAVVIQLLRTWL). The Cytoplasmic portion of the chain corresponds to 30-223 (SSKSYLFNQK…HTYLSELGLS (194 aa)). The segment at 98-105 (SLTEYILL) is important for ligand-binding. The tract at residues 176 to 223 (FIPSTMGFALADTIFSTQDFCTLFYTFRIYARCLLLETHTYLSELGLS) is C-terminal hydrophobic region.

This sequence belongs to the ERG2 family. In terms of assembly, homotrimer.

It localises to the nucleus inner membrane. The protein resides in the nucleus outer membrane. The protein localises to the nucleus envelope. It is found in the cytoplasmic vesicle. Its subcellular location is the endoplasmic reticulum membrane. It localises to the membrane. Functionally, may function in lipid transport from the endoplasmic reticulum and be involved in a wide array of cellular functions probably through regulation of the biogenesis of lipid microdomains at the plasma membrane. May regulate calcium efflux at the endoplasmic reticulum. This chain is Sigma non-opioid intracellular receptor 1 (SIGMAR1), found in Taricha granulosa (Roughskin newt).